Reading from the N-terminus, the 552-residue chain is Glucose-6-phosphate isomerase (552 aa).

Glu359 functions as the Proton donor in the catalytic mechanism. Residues His390 and Lys514 contribute to the active site.

The protein belongs to the GPI family.

The protein resides in the cytoplasm. It catalyses the reaction alpha-D-glucose 6-phosphate = beta-D-fructose 6-phosphate. It functions in the pathway carbohydrate biosynthesis; gluconeogenesis. Its pathway is carbohydrate degradation; glycolysis; D-glyceraldehyde 3-phosphate and glycerone phosphate from D-glucose: step 2/4. Catalyzes the reversible isomerization of glucose-6-phosphate to fructose-6-phosphate. This chain is Glucose-6-phosphate isomerase, found in Streptomyces griseus subsp. griseus (strain JCM 4626 / CBS 651.72 / NBRC 13350 / KCC S-0626 / ISP 5235).